A 134-amino-acid chain; its full sequence is Rubredoxin-2 (134 aa).

The Rubredoxin-like domain occupies 1–53; that stretch reads MAKYQCPDCQYIYDECKGEPHEGFQPNTNWGEIPEEWACPDCAVRDKIDFKML. 4 residues coordinate Fe cation: Cys-6, Cys-9, Cys-39, and Cys-42. Residues 99-116 show a composition bias toward basic and acidic residues; it reads SITDERENTPDNKVERRS. Residues 99-134 are disordered; it reads SITDERENTPDNKVERRSQSQAVRRSSVKKIKNNKR. A compositionally biased stretch (basic residues) spans 124–134; it reads SSVKKIKNNKR.

The protein belongs to the rubredoxin family. Fe(3+) is required as a cofactor.

It is found in the cytoplasm. Its pathway is hydrocarbon metabolism; alkane degradation. In terms of biological role, involved in the hydrocarbon hydroxylating system, which transfers electrons from NADH to rubredoxin reductase and then through rubredoxin to alkane 1 monooxygenase. The sequence is that of Rubredoxin-2 (alkF) from Pseudomonas putida (Arthrobacter siderocapsulatus).